Here is a 396-residue protein sequence, read N- to C-terminus: L-lactate dehydrogenase (396 aa).

The FMN hydroxy acid dehydrogenase domain maps to 1 to 380 (MIISAASDYR…TQDSLVQGLG (380 aa)). Residue Tyr24 participates in substrate binding. FMN-binding residues include Ser106 and Gln127. Tyr129 is a binding site for substrate. Position 155 (Thr155) interacts with FMN. Residue Arg164 coordinates substrate. Position 251 (Lys251) interacts with FMN. The Proton acceptor role is filled by His275. Arg278 serves as a coordination point for substrate. 306–330 (DSGIRNGLDVVRMIALGADTVLLGR) is an FMN binding site.

This sequence belongs to the FMN-dependent alpha-hydroxy acid dehydrogenase family. Requires FMN as cofactor.

It is found in the cell inner membrane. It catalyses the reaction (S)-lactate + A = pyruvate + AH2. In terms of biological role, catalyzes the conversion of L-lactate to pyruvate. Is coupled to the respiratory chain. The protein is L-lactate dehydrogenase of Escherichia coli O7:K1 (strain IAI39 / ExPEC).